Here is a 209-residue protein sequence, read N- to C-terminus: Uracil phosphoribosyltransferase (209 aa).

5-phospho-alpha-D-ribose 1-diphosphate-binding positions include R79, R104, and 131 to 139; that span reads DPMLATGGS. Uracil contacts are provided by residues I194 and 199 to 201; that span reads GDA. D200 provides a ligand contact to 5-phospho-alpha-D-ribose 1-diphosphate.

Belongs to the UPRTase family. The cofactor is Mg(2+).

The catalysed reaction is UMP + diphosphate = 5-phospho-alpha-D-ribose 1-diphosphate + uracil. The protein operates within pyrimidine metabolism; UMP biosynthesis via salvage pathway; UMP from uracil: step 1/1. Allosterically activated by GTP. Functionally, catalyzes the conversion of uracil and 5-phospho-alpha-D-ribose 1-diphosphate (PRPP) to UMP and diphosphate. The sequence is that of Uracil phosphoribosyltransferase from Pediococcus pentosaceus (strain ATCC 25745 / CCUG 21536 / LMG 10740 / 183-1w).